Reading from the N-terminus, the 33-residue chain is Photosystem II reaction center protein Psb30 (33 aa).

Residues 5-25 (IVAQLTVLALIVVSGPLVIAL) traverse the membrane as a helical segment.

Belongs to the Psb30/Ycf12 family. In terms of assembly, PSII is composed of 1 copy each of membrane proteins PsbA, PsbB, PsbC, PsbD, PsbE, PsbF, PsbH, PsbI, PsbJ, PsbK, PsbL, PsbM, PsbT, PsbX, PsbY, PsbZ, Psb30/Ycf12, peripheral proteins of the oxygen-evolving complex and a large number of cofactors. It forms dimeric complexes.

The protein localises to the plastid. It is found in the chloroplast thylakoid membrane. A core subunit of photosystem II (PSII), probably helps stabilize the reaction center. This chain is Photosystem II reaction center protein Psb30, found in Angiopteris evecta (Mule's foot fern).